Reading from the N-terminus, the 479-residue chain is MDGDIAAGKMASPVCAMAPLDSMEVLDLLFDRQDGILRNVELAEGWILAREEQKVLLNSDSDEFLNCILGPGDSDPSSPLWSPADSDSGISEDLPSDPQDTPPRSGTEPANTVARCHTREQGKGPCPSYLPSTPCPEPPRTQVQESSVAIDLDMWSTDTLYPEEPAGSPSRFNLTVKELLLSGGSGDLQQHSLAASQLLGPGSGHCQELVLTEDEKKLLAKEGVTLPTQLPLTKYEERVLKKIRRKIRNKQSAQESRKKKKEYIDGLENRMSACTAQNQELQRKVLHLEKQNLSLLEQLKHLQALVVQSTSKPAHAGTCIAVLLLSFALIILPSISPFNSNKVDSPGDFVPVRVFSRTLHNHAASRVAPDVTPGSEVPGPWPDVGTPHKGPSSGGLSADWGNFLEIPMLDNLTEELDNSTLVLANSTEDLGRATLLDWVASEPLLSPGRVGLEIPGEMWLSWVPRWLRVRLVQDALGVL.

Residues 1 to 317 (MDGDIAAGKM…QSTSKPAHAG (317 aa)) are Cytoplasmic-facing. Positions 67-144 (CILGPGDSDP…CPEPPRTQVQ (78 aa)) are disordered. Polar residues predominate over residues 98 to 110 (PQDTPPRSGTEPA). A bZIP domain is found at 239-302 (VLKKIRRKIR…LSLLEQLKHL (64 aa)). Residues 241–270 (KKIRRKIRNKQSAQESRKKKKEYIDGLENR) are basic motif. Residues 281-302 (LQRKVLHLEKQNLSLLEQLKHL) form a leucine-zipper region. Lys290 is covalently cross-linked (Glycyl lysine isopeptide (Lys-Gly) (interchain with G-Cter in ubiquitin)). The helical; Signal-anchor for type II membrane protein transmembrane segment at 318–338 (TCIAVLLLSFALIILPSISPF) threads the bilayer. At 339-479 (NSNKVDSPGD…RLVQDALGVL (141 aa)) the chain is on the lumenal side. Asn411, Asn418, and Asn425 each carry an N-linked (GlcNAc...) asparagine glycan.

This sequence belongs to the bZIP family. ATF subfamily. As to quaternary structure, binds DNA as a dimer. May form homodimers. Interacts with ATF6. Interacts with SYNV1/HRD1; this interaction leads to CREB3L3 ubiquitination and proteasomal degradation. In terms of processing, following ER stress a fragment containing the cytoplasmic transcription factor domain is released by proteolysis. The cleavage seems to be performed sequentially by site-1 and site-2 proteases. Post-translationally, N-glycosylation is required for optimal proteolytic activation. Ubiquitinated at Lys-290 by SYNV1/HRD1 via 'Lys-27'-linked ubiquitin. As to expression, expressed in adult liver (at protein level) and small intestine.

The protein localises to the endoplasmic reticulum membrane. It localises to the nucleus. Functionally, transcription factor that may act during endoplasmic reticulum (ER) stress by activating unfolded protein response target genes. Activated in response to cAMP stimulation. Binds to the cAMP response element (CRE). Activates transcription through box-B element. Activates transcription through CRE. May function synergistically with ATF6. In acute inflammatory response, may activate expression of acute phase response (APR) genes. May be involved in growth suppression. Regulates FGF21 transcription. Plays a crucial role in the regulation of triglyceride metabolism and is required for the maintenance of normal plasma triglyceride concentrations. The chain is Cyclic AMP-responsive element-binding protein 3-like protein 3 (Creb3l3) from Mus musculus (Mouse).